The primary structure comprises 295 residues: MAGTARGCGTSLDLLRSLPRVSLANLKPSPNSRKRERRPRDRRRGRKCGRGHKGERQRGTRPRLGFEGGQTPFYIRIPKYGFNEGHSFRHQYQPLSLRRLQYLIDLGRVDPTQPIDLTQLVNGRGVTIQPLKRDYGVQLVEEGADTFQAKINIEVQLASELAIAAIEKNGGVVTTAFYDPRSLEILCKPIPFFLRGQPIPKRMLPPESLVPYYTDAKNRGYLADPAKFPEARLELAMKFGYVLPDITKDELFRMLSARKDPRQIFFGLAPGWVVNMADKKILKPTDENLLKYYSS.

The transit peptide at 1–20 (MAGTARGCGTSLDLLRSLPR) directs the protein to the mitochondrion. Positions 21–67 (VSLANLKPSPNSRKRERRPRDRRRGRKCGRGHKGERQRGTRPRLGFE) are disordered. Basic residues predominate over residues 32-51 (SRKRERRPRDRRRGRKCGRG).

It belongs to the universal ribosomal protein uL15 family. As to quaternary structure, component of the mitochondrial ribosome large subunit (39S) which comprises a 16S rRNA and about 50 distinct proteins.

Its subcellular location is the mitochondrion. The protein is Large ribosomal subunit protein uL15m (Mrpl15) of Mus musculus (Mouse).